We begin with the raw amino-acid sequence, 298 residues long: Specificity protein transcription factor 1 (298 aa).

Positions valine 206 to threonine 218 are enriched in low complexity. The disordered stretch occupies residues valine 206–alanine 233. A C2H2-type zinc finger spans residues histidine 260 to histidine 284.

The protein belongs to the Sp1 C2H2-type zinc-finger protein family. In terms of tissue distribution, expressed in ASJ sensory neurons, pharyngeal cells, rectal cells, intestine, seam cells, and vulval cells.

Functionally, probable transcription factor which modulates gene expression, thereby acting as an ASJ sensory neuron terminal selector gene. This is Specificity protein transcription factor 1 from Caenorhabditis elegans.